We begin with the raw amino-acid sequence, 273 residues long: Diphthine methyl ester synthase (273 aa).

Residues Leu-10, Asp-87, Gly-90, 115–116 (SI), Leu-166, Val-224, and His-249 each bind S-adenosyl-L-methionine.

The protein belongs to the diphthine synthase family.

It catalyses the reaction 2-[(3S)-amino-3-carboxypropyl]-L-histidyl-[translation elongation factor 2] + 4 S-adenosyl-L-methionine = diphthine methyl ester-[translation elongation factor 2] + 4 S-adenosyl-L-homocysteine + 3 H(+). Its pathway is protein modification; peptidyl-diphthamide biosynthesis. S-adenosyl-L-methionine-dependent methyltransferase that catalyzes four methylations of the modified target histidine residue in translation elongation factor 2 (EF-2), to form an intermediate called diphthine methyl ester. The four successive methylation reactions represent the second step of diphthamide biosynthesis. This chain is Diphthine methyl ester synthase (dph5), found in Dictyostelium discoideum (Social amoeba).